Reading from the N-terminus, the 52-residue chain is Large ribosomal subunit protein bL32c (52 aa).

Belongs to the bacterial ribosomal protein bL32 family.

The protein localises to the plastid. It is found in the chloroplast. The protein is Large ribosomal subunit protein bL32c of Arabis hirsuta (Hairy rock-cress).